Consider the following 349-residue polypeptide: Ethyl acetate hydrolase (349 aa).

In terms of domain architecture, AB hydrolase-1 spans Tyr67–Asp300. Ser139 (nucleophile) is an active-site residue. Residues Asp293 and His322 contribute to the active site.

This sequence belongs to the AB hydrolase superfamily. Acetyl esterase family. Homodimer.

It carries out the reaction ethyl acetate + H2O = ethanol + acetate + H(+). Its function is as follows. Esterase that catalyzes the hydrolysis of ethyl acetate. Involved in the degradation of short chain methyl ketones (MEK) such as 2-butanone and 2-hexanone. In vitro, can also hydrolyze vinyl acetate, 4-nitrophenyl acetate, methyl acetate, propyl acetate, benzyl acetate and methyl propionate. The highest activities are obtained with acetic acid esters, but the alcohol group also plays an important role, as compounds with two carbon atoms in the alcohol moiety, i.e., vinyl and ethyl acetate, are by far the preferred substrates. The sequence is that of Ethyl acetate hydrolase from Pseudomonas veronii.